The sequence spans 301 residues: Large ribosomal subunit protein uL18 (301 aa).

The segment covering 257–271 (NPERVKSTKKNDKPK) has biased composition (basic and acidic residues). Residues 257–283 (NPERVKSTKKNDKPKRDHKKFYPTKLT) form a disordered region.

It belongs to the universal ribosomal protein uL18 family. As to quaternary structure, component of the large ribosomal subunit (LSU).

Its subcellular location is the cytoplasm. The protein localises to the nucleus. Component of the ribosome, a large ribonucleoprotein complex responsible for the synthesis of proteins in the cell. The small ribosomal subunit (SSU) binds messenger RNAs (mRNAs) and translates the encoded message by selecting cognate aminoacyl-transfer RNA (tRNA) molecules. The large subunit (LSU) contains the ribosomal catalytic site termed the peptidyl transferase center (PTC), which catalyzes the formation of peptide bonds, thereby polymerizing the amino acids delivered by tRNAs into a polypeptide chain. The nascent polypeptides leave the ribosome through a tunnel in the LSU and interact with protein factors that function in enzymatic processing, targeting, and the membrane insertion of nascent chains at the exit of the ribosomal tunnel. In Tetrahymena thermophila (strain SB210), this protein is Large ribosomal subunit protein uL18 (RPL5).